The sequence spans 117 residues: Putative membrane protein insertion efficiency factor (117 aa).

It belongs to the UPF0161 family.

It is found in the cell inner membrane. Functionally, could be involved in insertion of integral membrane proteins into the membrane. This is Putative membrane protein insertion efficiency factor from Bartonella bacilliformis (strain ATCC 35685 / KC583 / Herrer 020/F12,63).